We begin with the raw amino-acid sequence, 269 residues long: Peptide deformylase 1B, chloroplastic (269 aa).

Residues 1 to 51 (MAARLHLRLGPRLRGFASSFAPLLAAHPRALPLSRMGSVAPLAAARARRGF) constitute a chloroplast transit peptide. Fe cation contacts are provided by C168 and H210. E211 is an active-site residue. Residue H214 participates in Fe cation binding.

The protein belongs to the polypeptide deformylase family. As to quaternary structure, homodimer. The cofactor is Fe(2+). In terms of tissue distribution, mainly expressed in mature leaves and sheaths.

The protein resides in the plastid. It is found in the chloroplast stroma. It localises to the mitochondrion. The enzyme catalyses N-terminal N-formyl-L-methionyl-[peptide] + H2O = N-terminal L-methionyl-[peptide] + formate. With respect to regulation, inhibited by actinonin. In terms of biological role, removes the formyl group from the N-terminal Met of newly synthesized proteins. In Oryza sativa subsp. japonica (Rice), this protein is Peptide deformylase 1B, chloroplastic (PDF1B).